The chain runs to 368 residues: UDP-N-acetylglucosamine--N-acetylmuramyl-(pentapeptide) pyrophosphoryl-undecaprenol N-acetylglucosamine transferase (368 aa).

UDP-N-acetyl-alpha-D-glucosamine is bound by residues 16–18 (TGG), asparagine 130, arginine 171, serine 197, and glutamine 296.

This sequence belongs to the glycosyltransferase 28 family. MurG subfamily.

It localises to the cell inner membrane. It catalyses the reaction di-trans,octa-cis-undecaprenyl diphospho-N-acetyl-alpha-D-muramoyl-L-alanyl-D-glutamyl-meso-2,6-diaminopimeloyl-D-alanyl-D-alanine + UDP-N-acetyl-alpha-D-glucosamine = di-trans,octa-cis-undecaprenyl diphospho-[N-acetyl-alpha-D-glucosaminyl-(1-&gt;4)]-N-acetyl-alpha-D-muramoyl-L-alanyl-D-glutamyl-meso-2,6-diaminopimeloyl-D-alanyl-D-alanine + UDP + H(+). It functions in the pathway cell wall biogenesis; peptidoglycan biosynthesis. In terms of biological role, cell wall formation. Catalyzes the transfer of a GlcNAc subunit on undecaprenyl-pyrophosphoryl-MurNAc-pentapeptide (lipid intermediate I) to form undecaprenyl-pyrophosphoryl-MurNAc-(pentapeptide)GlcNAc (lipid intermediate II). In Acidiphilium cryptum (strain JF-5), this protein is UDP-N-acetylglucosamine--N-acetylmuramyl-(pentapeptide) pyrophosphoryl-undecaprenol N-acetylglucosamine transferase.